The chain runs to 158 residues: SsrA-binding protein (158 aa).

This sequence belongs to the SmpB family.

It is found in the cytoplasm. Its function is as follows. Required for rescue of stalled ribosomes mediated by trans-translation. Binds to transfer-messenger RNA (tmRNA), required for stable association of tmRNA with ribosomes. tmRNA and SmpB together mimic tRNA shape, replacing the anticodon stem-loop with SmpB. tmRNA is encoded by the ssrA gene; the 2 termini fold to resemble tRNA(Ala) and it encodes a 'tag peptide', a short internal open reading frame. During trans-translation Ala-aminoacylated tmRNA acts like a tRNA, entering the A-site of stalled ribosomes, displacing the stalled mRNA. The ribosome then switches to translate the ORF on the tmRNA; the nascent peptide is terminated with the 'tag peptide' encoded by the tmRNA and targeted for degradation. The ribosome is freed to recommence translation, which seems to be the essential function of trans-translation. In Roseiflexus castenholzii (strain DSM 13941 / HLO8), this protein is SsrA-binding protein.